A 61-amino-acid polypeptide reads, in one-letter code: Large ribosomal subunit protein eL29 (61 aa).

The span at 1–26 shows a compositional bias: basic residues; the sequence is MAKSKNHTNHNQNKKAHRNGIKRPQK. The tract at residues 1–32 is disordered; sequence MAKSKNHTNHNQNKKAHRNGIKRPQKHRYDSL.

This sequence belongs to the eukaryotic ribosomal protein eL29 family. Component of the large ribosomal subunit (LSU). Mature yeast ribosomes consist of a small (40S) and a large (60S) subunit. The 40S small subunit contains 1 molecule of ribosomal RNA (18S rRNA) and at least 33 different proteins. The large 60S subunit contains 3 rRNA molecules (25S, 5.8S and 5S rRNA) and at least 46 different proteins.

The protein resides in the cytoplasm. Its subcellular location is the nucleus. It localises to the nucleolus. Functionally, component of the ribosome, a large ribonucleoprotein complex responsible for the synthesis of proteins in the cell. The small ribosomal subunit (SSU) binds messenger RNAs (mRNAs) and translates the encoded message by selecting cognate aminoacyl-transfer RNA (tRNA) molecules. The large subunit (LSU) contains the ribosomal catalytic site termed the peptidyl transferase center (PTC), which catalyzes the formation of peptide bonds, thereby polymerizing the amino acids delivered by tRNAs into a polypeptide chain. The nascent polypeptides leave the ribosome through a tunnel in the LSU and interact with protein factors that function in enzymatic processing, targeting, and the membrane insertion of nascent chains at the exit of the ribosomal tunnel. The polypeptide is Large ribosomal subunit protein eL29 (rpl29) (Schizosaccharomyces pombe (strain 972 / ATCC 24843) (Fission yeast)).